The primary structure comprises 1203 residues: DNA-directed RNA polymerase subunit beta (1203 aa).

Positions 1174–1195 are enriched in basic and acidic residues; that stretch reads AAQEAKAAFEAEEAEKATKAEA. The interval 1174–1203 is disordered; sequence AAQEAKAAFEAEEAEKATKAEATEEAAEQE.

The protein belongs to the RNA polymerase beta chain family. In terms of assembly, the RNAP catalytic core consists of 2 alpha, 1 beta, 1 beta' and 1 omega subunit. When a sigma factor is associated with the core the holoenzyme is formed, which can initiate transcription.

It catalyses the reaction RNA(n) + a ribonucleoside 5'-triphosphate = RNA(n+1) + diphosphate. In terms of biological role, DNA-dependent RNA polymerase catalyzes the transcription of DNA into RNA using the four ribonucleoside triphosphates as substrates. The polypeptide is DNA-directed RNA polymerase subunit beta (Streptococcus pneumoniae serotype 19F (strain G54)).